The primary structure comprises 268 residues: FKBP-type peptidyl-prolyl cis-trans isomerase FkpA (268 aa).

A signal peptide spans 1-20 (MNNFLKVSLLAAAVAVSLTA). The region spanning 172–257 (TDIVKVHYTG…VFDVELLAIE (86 aa)) is the PPIase FKBP-type domain.

The protein belongs to the FKBP-type PPIase family.

It localises to the periplasm. It carries out the reaction [protein]-peptidylproline (omega=180) = [protein]-peptidylproline (omega=0). Functionally, PPIases accelerate the folding of proteins. It catalyzes the cis-trans isomerization of proline imidic peptide bonds in oligopeptides. FkpA probably acts in the folding of extracytoplasmic proteins. The polypeptide is FKBP-type peptidyl-prolyl cis-trans isomerase FkpA (fkpA) (Aeromonas hydrophila).